The primary structure comprises 855 residues: Oxysterol-binding protein-related protein 3 (855 aa).

The tract at residues Met-1–Asp-32 is disordered. Phosphoserine is present on residues Ser-15 and Ser-33. The span at Ser-15 to Gln-31 shows a compositional bias: low complexity. The PH domain maps to Pro-50–Met-145. Positions Phe-161–Val-167 match the FFAT 1 motif. A phosphoserine mark is found at Ser-199, Ser-250, Ser-272, Ser-277, Ser-288, Ser-291, Ser-340, Ser-393, Ser-405, and Ser-408. Residues Pro-274–Ala-293 form a disordered region. The disordered stretch occupies residues Asp-377–Glu-396. The FFAT 2 signature appears at Leu-450–Asn-454. The segment at Pro-468–Asn-490 is disordered.

Belongs to the OSBP family. In terms of assembly, homodimer. Interacts with RRAS. Interacts (phosphorylated form) with VAPA. Interacts with OSBPL6. In terms of processing, phosphorylation is enhanced in vitro by phorbol-12-myristate-13-acetate (PMA), forskolin and calcium ionophore A23187. Phosphorylation seems to be stimulated in conditions of low cell-cell (or cell-matrix) adhesion. Expressed in spinal ganglia. Expressed in a subset of small lymphocytes (at protein level).

The protein resides in the endoplasmic reticulum membrane. It localises to the cytoplasm. Its subcellular location is the cytosol. The protein localises to the cell membrane. It is found in the cell projection. The protein resides in the filopodium tip. It localises to the nucleus membrane. Phosphoinositide-binding protein which associates with both cell and endoplasmic reticulum (ER) membranes. Can bind to the ER membrane protein VAPA and recruit VAPA to plasma membrane sites, thus linking these intracellular compartments. The ORP3-VAPA complex stimulates RRAS signaling which in turn attenuates integrin beta-1 (ITGB1) activation at the cell surface. With VAPA, may regulate ER morphology. Has a role in regulation of the actin cytoskeleton, cell polarity and cell adhesion. Binds to phosphoinositides with preference for PI(3,4)P2 and PI(3,4,5)P3. Also binds 25-hydroxycholesterol and cholesterol. This is Oxysterol-binding protein-related protein 3 (Osbpl3) from Mus musculus (Mouse).